A 1604-amino-acid chain; its full sequence is Ubiquitin carboxyl-terminal hydrolase 32 (1604 aa).

3 EF-hand domains span residues 91-126 (KDEE…VDGK), 228-263 (IRPS…CCRG), and 264-299 (PLAE…LLEV). The Ca(2+) site is built by Asp241, Asn243, Asp245, His247, Glu252, Asp277, Asp279, Asp281, and Glu288. The 217-residue stretch at 369–585 (ATPEEEGQII…ANLALPRPVI (217 aa)) folds into the DUSP domain. The USP domain occupies 734-1567 (TGLSNLGNTC…SAYILFYEQQ (834 aa)). The active-site Nucleophile is the Cys743. Phosphotyrosine is present on Tyr1173. Disordered stretches follow at residues 1343 to 1362 (KKVD…SKSP) and 1367 to 1431 (ANII…DASK). Residues Ser1350, Ser1372, Ser1376, and Ser1454 each carry the phosphoserine modification. Residues 1367-1399 (ANIISSPKGSPSSSRKSGTSCPSSKNSSPNSSP) show a composition bias toward low complexity. His1526 acts as the Proton acceptor in catalysis. Ser1588 is subject to Phosphoserine. Cys1601 carries the cysteine methyl ester modification. The S-farnesyl cysteine moiety is linked to residue Cys1601. A propeptide spans 1602-1604 (VLQ) (removed in mature form).

The protein belongs to the peptidase C19 family.

The protein resides in the golgi apparatus membrane. It catalyses the reaction Thiol-dependent hydrolysis of ester, thioester, amide, peptide and isopeptide bonds formed by the C-terminal Gly of ubiquitin (a 76-residue protein attached to proteins as an intracellular targeting signal).. Deubiquitinase that can remove conjugated ubiquitin from target proteins, such as RAB7A and LAMTOR1. Acts as a positive regulator of the mTORC1 signaling by mediating deubiquitination of LAMTOR1, thereby promoting the association between LAMTOR1 and the lysosomal V-ATPase complex and subsequent activation of the mTORC1 complex. In Homo sapiens (Human), this protein is Ubiquitin carboxyl-terminal hydrolase 32 (USP32).